The following is a 217-amino-acid chain: Adenylate kinase (217 aa).

10–15 (GAGKGT) is a binding site for ATP. The interval 30 to 59 (STGDMLRAAVKAESELGLQVKEVMASGGLV) is NMP. AMP-binding positions include Thr-31, Arg-36, 57–59 (GLV), 85–88 (GFPR), and Gln-92. The tract at residues 122–159 (GRRVHEGSGRIYHVKYDPPKVEGKDDETGEALIQREDD) is LID. Residues Arg-123 and 132–133 (IY) each bind ATP. AMP contacts are provided by Arg-156 and Arg-167. Gly-203 serves as a coordination point for ATP.

It belongs to the adenylate kinase family. In terms of assembly, monomer.

The protein localises to the cytoplasm. It catalyses the reaction AMP + ATP = 2 ADP. Its pathway is purine metabolism; AMP biosynthesis via salvage pathway; AMP from ADP: step 1/1. Its function is as follows. Catalyzes the reversible transfer of the terminal phosphate group between ATP and AMP. Plays an important role in cellular energy homeostasis and in adenine nucleotide metabolism. This is Adenylate kinase from Marinobacter nauticus (strain ATCC 700491 / DSM 11845 / VT8) (Marinobacter aquaeolei).